Consider the following 258-residue polypeptide: Imidazole glycerol phosphate synthase subunit HisF (258 aa).

Residues Asp11 and Asp130 contribute to the active site.

The protein belongs to the HisA/HisF family. Heterodimer of HisH and HisF.

The protein resides in the cytoplasm. The enzyme catalyses 5-[(5-phospho-1-deoxy-D-ribulos-1-ylimino)methylamino]-1-(5-phospho-beta-D-ribosyl)imidazole-4-carboxamide + L-glutamine = D-erythro-1-(imidazol-4-yl)glycerol 3-phosphate + 5-amino-1-(5-phospho-beta-D-ribosyl)imidazole-4-carboxamide + L-glutamate + H(+). It functions in the pathway amino-acid biosynthesis; L-histidine biosynthesis; L-histidine from 5-phospho-alpha-D-ribose 1-diphosphate: step 5/9. In terms of biological role, IGPS catalyzes the conversion of PRFAR and glutamine to IGP, AICAR and glutamate. The HisF subunit catalyzes the cyclization activity that produces IGP and AICAR from PRFAR using the ammonia provided by the HisH subunit. The protein is Imidazole glycerol phosphate synthase subunit HisF of Roseiflexus sp. (strain RS-1).